A 1243-amino-acid polypeptide reads, in one-letter code: Inositol hexakisphosphate and diphosphoinositol-pentakisphosphate kinase 2 (1243 aa).

Phosphoserine is present on serine 38. Residue 53-54 (KK) coordinates substrate. ATP-binding residues include arginine 134, lysine 187, histidine 194, and arginine 213. Position 213–214 (213–214 (RK)) interacts with substrate. Serine 223 is subject to Phosphoserine. ATP-binding positions include 237–240 (EEFM) and 246–248 (DVK). Residues lysine 248 and arginine 262 each coordinate substrate. Residues serine 264, aspartate 309, and 321 to 323 (DVN) each bind ATP. Residue 326–329 (SFVK) coordinates substrate. Residues 371 to 442 (PTTSGTMMEL…VLDIARQLLM (72 aa)) form a polyphosphoinositide-binding domain region. Disordered regions lie at residues 898–941 (KGCE…RDEV) and 957–1016 (HIHR…SPVS). Residues 915-941 (ASRENEGRRPFKIDNDDEPHTSKRDEV) show a composition bias toward basic and acidic residues. Basic residues predominate over residues 958-969 (IHRKSPLPRSRK). Residues serine 1006, serine 1016, serine 1074, serine 1091, serine 1165, serine 1172, and serine 1180 each carry the phosphoserine modification. The tract at residues 1185-1243 (TPAKILPTPPATLKSTKASSKPATSGPSSAVVPNTSSRKKNITSKTETHEHKKNTGKKK) is disordered. Low complexity predominate over residues 1195 to 1209 (ATLKSTKASSKPATS). Residues 1210 to 1220 (GPSSAVVPNTS) show a composition bias toward polar residues. Phosphoserine is present on residues serine 1220 and serine 1221.

This sequence belongs to the histidine acid phosphatase family. VIP1 subfamily.

The protein resides in the cytoplasm. It is found in the cytosol. It catalyses the reaction 1D-myo-inositol hexakisphosphate + ATP = 1-diphospho-1D-myo-inositol 2,3,4,5,6-pentakisphosphate + ADP. The enzyme catalyses 5-diphospho-1D-myo-inositol 1,2,3,4,6-pentakisphosphate + ATP + H(+) = 1,5-bis(diphospho)-1D-myo-inositol 2,3,4,6-tetrakisphosphate + ADP. Its function is as follows. Bifunctional inositol kinase that acts in concert with the IP6K kinases IP6K1, IP6K2 and IP6K3 to synthesize the diphosphate group-containing inositol pyrophosphates diphosphoinositol pentakisphosphate, PP-InsP5, and bis-diphosphoinositol tetrakisphosphate, (PP)2-InsP4. PP-InsP5 and (PP)2-InsP4, also respectively called InsP7 and InsP8, regulate a variety of cellular processes, including apoptosis, vesicle trafficking, cytoskeletal dynamics, exocytosis, insulin signaling and neutrophil activation. Phosphorylates inositol hexakisphosphate (InsP6) at position 1 to produce PP-InsP5 which is in turn phosphorylated by IP6Ks to produce (PP)2-InsP4. Alternatively, phosphorylates PP-InsP5 at position 1, produced by IP6Ks from InsP6, to produce (PP)2-InsP4. Required for normal hearing. The chain is Inositol hexakisphosphate and diphosphoinositol-pentakisphosphate kinase 2 from Homo sapiens (Human).